A 177-amino-acid chain; its full sequence is HVA22-like protein a (177 aa).

3 helical membrane-spanning segments follow: residues 18-38, 47-67, and 68-88; these read VLAG…QAIE, QWLT…TFAK, and LIEW…WLVI.

This sequence belongs to the DP1 family. In terms of tissue distribution, predominantly expressed in flower buds and stem.

The protein resides in the membrane. In Arabidopsis thaliana (Mouse-ear cress), this protein is HVA22-like protein a (HVA22A).